The sequence spans 258 residues: Imidazole glycerol phosphate synthase subunit HisF (258 aa).

Active-site residues include D11 and D130.

The protein belongs to the HisA/HisF family. As to quaternary structure, heterodimer of HisH and HisF.

The protein localises to the cytoplasm. It carries out the reaction 5-[(5-phospho-1-deoxy-D-ribulos-1-ylimino)methylamino]-1-(5-phospho-beta-D-ribosyl)imidazole-4-carboxamide + L-glutamine = D-erythro-1-(imidazol-4-yl)glycerol 3-phosphate + 5-amino-1-(5-phospho-beta-D-ribosyl)imidazole-4-carboxamide + L-glutamate + H(+). It functions in the pathway amino-acid biosynthesis; L-histidine biosynthesis; L-histidine from 5-phospho-alpha-D-ribose 1-diphosphate: step 5/9. Its function is as follows. IGPS catalyzes the conversion of PRFAR and glutamine to IGP, AICAR and glutamate. The HisF subunit catalyzes the cyclization activity that produces IGP and AICAR from PRFAR using the ammonia provided by the HisH subunit. In Xanthomonas campestris pv. campestris (strain B100), this protein is Imidazole glycerol phosphate synthase subunit HisF.